We begin with the raw amino-acid sequence, 159 residues long: MNIDIISVGKVKEKYIKLGIAEFSKRLSAHCKLNIIEVDDLSAAENLSDSEKEIVKDKEAEKIISKIKDSHYVITLEIVGNQLTSEKLAAKIENLTIQGHSNICFVIGGSLGLGKSVLDRSDYALSFSKFTFPHQLMRLILLEQIYRSFRIINNLPYHK.

S-adenosyl-L-methionine is bound by residues leucine 76 and glycine 108.

The protein belongs to the RNA methyltransferase RlmH family. In terms of assembly, homodimer.

The protein localises to the cytoplasm. The catalysed reaction is pseudouridine(1915) in 23S rRNA + S-adenosyl-L-methionine = N(3)-methylpseudouridine(1915) in 23S rRNA + S-adenosyl-L-homocysteine + H(+). Specifically methylates the pseudouridine at position 1915 (m3Psi1915) in 23S rRNA. The polypeptide is Ribosomal RNA large subunit methyltransferase H (Finegoldia magna (strain ATCC 29328 / DSM 20472 / WAL 2508) (Peptostreptococcus magnus)).